A 536-amino-acid chain; its full sequence is Anthranilate synthase component 1 2 (536 aa).

L-tryptophan-binding positions include Ser-59 and Pro-299–Met-301. Gly-334–Thr-335 provides a ligand contact to chorismate. A Mg(2+)-binding site is contributed by Glu-361. Chorismate contacts are provided by residues Tyr-449, Arg-469, Gly-487–Gly-489, and Gly-489. Glu-502 lines the Mg(2+) pocket.

The protein belongs to the anthranilate synthase component I family. As to quaternary structure, tetramer of two components I and two components II. Mg(2+) is required as a cofactor.

The catalysed reaction is chorismate + L-glutamine = anthranilate + pyruvate + L-glutamate + H(+). It participates in amino-acid biosynthesis; L-tryptophan biosynthesis; L-tryptophan from chorismate: step 1/5. The protein is Anthranilate synthase component 1 2 (trpE2) of Haloarcula marismortui (strain ATCC 43049 / DSM 3752 / JCM 8966 / VKM B-1809) (Halobacterium marismortui).